The sequence spans 149 residues: Large ribosomal subunit protein bL9 (149 aa).

The protein belongs to the bacterial ribosomal protein bL9 family.

In terms of biological role, binds to the 23S rRNA. The chain is Large ribosomal subunit protein bL9 from Bacillus pumilus (strain SAFR-032).